Consider the following 160-residue polypeptide: Cytochrome b6-f complex subunit 4 (160 aa).

Transmembrane regions (helical) follow at residues 36 to 56, 95 to 115, and 131 to 151; these read LLYVFPIVIMGSFAAIVALAV, LLGVLAMASVPLGLILVPFIE, and TVFLFGTLVTLWLGIGAALPL.

Belongs to the cytochrome b family. PetD subfamily. In terms of assembly, the 4 large subunits of the cytochrome b6-f complex are cytochrome b6, subunit IV (17 kDa polypeptide, PetD), cytochrome f and the Rieske protein, while the 4 small subunits are PetG, PetL, PetM and PetN. The complex functions as a dimer.

It localises to the cellular thylakoid membrane. Functionally, component of the cytochrome b6-f complex, which mediates electron transfer between photosystem II (PSII) and photosystem I (PSI), cyclic electron flow around PSI, and state transitions. The sequence is that of Cytochrome b6-f complex subunit 4 from Desmonostoc sp. (strain PCC 7906) (Nostoc sp. (strain PCC 7906)).